Here is a 294-residue protein sequence, read N- to C-terminus: UDP-3-O-acyl-N-acetylglucosamine deacetylase (294 aa).

Zn(2+)-binding residues include histidine 75, histidine 232, and aspartate 236. Histidine 259 serves as the catalytic Proton donor.

Belongs to the LpxC family. It depends on Zn(2+) as a cofactor.

It carries out the reaction a UDP-3-O-[(3R)-3-hydroxyacyl]-N-acetyl-alpha-D-glucosamine + H2O = a UDP-3-O-[(3R)-3-hydroxyacyl]-alpha-D-glucosamine + acetate. The protein operates within glycolipid biosynthesis; lipid IV(A) biosynthesis; lipid IV(A) from (3R)-3-hydroxytetradecanoyl-[acyl-carrier-protein] and UDP-N-acetyl-alpha-D-glucosamine: step 2/6. In terms of biological role, catalyzes the hydrolysis of UDP-3-O-myristoyl-N-acetylglucosamine to form UDP-3-O-myristoylglucosamine and acetate, the committed step in lipid A biosynthesis. This Campylobacter jejuni subsp. jejuni serotype O:6 (strain 81116 / NCTC 11828) protein is UDP-3-O-acyl-N-acetylglucosamine deacetylase.